The sequence spans 165 residues: Neuropeptide W (165 aa).

Positions 1 to 32 (MAWRPGERGAPASRPRLALLLLLLLLPLPSGA) are cleaved as a signal peptide. Residues 65 to 165 (ALRAAAGPLA…GLPCLAPGPF (101 aa)) constitute a propeptide that is removed on maturation. The disordered stretch occupies residues 106–165 (SQAGIPVRAPRSPRAPEPALEPESLDFSGAGQRLRRDVSRPAVDPAANRLGLPCLAPGPF). Positions 113–127 (RAPRSPRAPEPALEP) are enriched in low complexity. An O-linked (Xyl...) (chondroitin sulfate) serine glycan is attached at S133.

The protein belongs to the neuropeptide B/W family. Detected in cerebrospinal fluid and urine (at protein level). Detected at high levels in the substantia nigra, fetal kidney and trachea; at lower levels in testis, uterus, ovary and placenta. Not detectable in many regions of the central nervous system. Also detected at high levels in lymphoblastic leukemia and colorectal adenocarcinoma.

It is found in the secreted. Functionally, plays a regulatory role in the organization of neuroendocrine signals accessing the anterior pituitary gland. Stimulates water drinking and food intake. May play a role in the hypothalamic response to stress. NPW23 activates GPR7 and GPR8 more efficiently than NPW30. The sequence is that of Neuropeptide W (NPW) from Homo sapiens (Human).